The primary structure comprises 239 residues: Heptaprenylglyceryl phosphate synthase (239 aa).

Residue K12 coordinates sn-glycerol 1-phosphate. D14 and T40 together coordinate Mg(2+). Residues 159–164 (YLEYSG), G189, and 209–210 (GN) contribute to the sn-glycerol 1-phosphate site.

The protein belongs to the GGGP/HepGP synthase family. Group I subfamily. Homodimer. Mg(2+) is required as a cofactor.

The catalysed reaction is sn-glycerol 1-phosphate + all-trans-heptaprenyl diphosphate = 3-heptaprenyl-sn-glycero-1-phosphate + diphosphate. It functions in the pathway membrane lipid metabolism; glycerophospholipid metabolism. Its function is as follows. Prenyltransferase that catalyzes in vivo the transfer of the heptaprenyl moiety of heptaprenyl pyrophosphate (HepPP; 35 carbon atoms) to the C3 hydroxyl of sn-glycerol-1-phosphate (G1P), producing heptaprenylglyceryl phosphate (HepGP). This reaction is an ether-bond-formation step in the biosynthesis of archaea-type G1P-based membrane lipids found in Bacillales. This chain is Heptaprenylglyceryl phosphate synthase, found in Geobacillus thermodenitrificans (strain NG80-2).